A 221-amino-acid chain; its full sequence is Transcriptional regulatory protein QseB (221 aa).

Positions 2–116 constitute a Response regulatory domain; the sequence is RILLIEDDNL…EVAARLQALI (115 aa). The residue at position 51 (Asp-51) is a 4-aspartylphosphate. Positions 124–218 form a DNA-binding region, ompR/PhoB-type; it reads HSVIEQAGVK…VHGVGYALGQ (95 aa).

In terms of processing, phosphorylated by QseC.

Its subcellular location is the cytoplasm. Member of a two-component regulatory system QseB/QseC. This Haemophilus influenzae (strain ATCC 51907 / DSM 11121 / KW20 / Rd) protein is Transcriptional regulatory protein QseB (qseB).